The chain runs to 786 residues: Ribosome biogenesis protein BOP1 homolog (786 aa).

Positions Met1–Val11 are enriched in basic residues. The segment at Met1 to Ile161 is disordered. Residues Ile17–Gln26 show a composition bias toward polar residues. 3 stretches are compositionally biased toward acidic residues: residues Glu44–Asp53, Thr60–Gly72, and Ser82–Lys114. The segment covering Lys122 to Ile135 has biased composition (polar residues). Basic and acidic residues predominate over residues Pro141–Tyr150. The segment covering Glu151 to Asp160 has biased composition (acidic residues). WD repeat units follow at residues Gly447–Glu488, Asn490–Val528, Thr572–Pro614, Lys617–Lys655, Thr658–Gln697, Leu701–Gln740, and Arg756–Thr786.

The protein belongs to the WD repeat BOP1/ERB1 family.

It is found in the nucleus. It localises to the nucleolus. The protein localises to the nucleoplasm. Functionally, required for maturation of ribosomal RNAs and formation of the large ribosomal subunit. This is Ribosome biogenesis protein BOP1 homolog from Drosophila grimshawi (Hawaiian fruit fly).